We begin with the raw amino-acid sequence, 275 residues long: 3-methyl-2-oxobutanoate hydroxymethyltransferase (275 aa).

Aspartate 49 and aspartate 88 together coordinate Mg(2+). 3-methyl-2-oxobutanoate is bound by residues 49-50 (DS), aspartate 88, and lysine 118. Glutamate 120 serves as a coordination point for Mg(2+). Glutamate 187 functions as the Proton acceptor in the catalytic mechanism.

Belongs to the PanB family. In terms of assembly, homodecamer; pentamer of dimers. Requires Mg(2+) as cofactor.

It localises to the cytoplasm. The enzyme catalyses 3-methyl-2-oxobutanoate + (6R)-5,10-methylene-5,6,7,8-tetrahydrofolate + H2O = 2-dehydropantoate + (6S)-5,6,7,8-tetrahydrofolate. Its pathway is cofactor biosynthesis; (R)-pantothenate biosynthesis; (R)-pantoate from 3-methyl-2-oxobutanoate: step 1/2. Its function is as follows. Catalyzes the reversible reaction in which hydroxymethyl group from 5,10-methylenetetrahydrofolate is transferred onto alpha-ketoisovalerate to form ketopantoate. The sequence is that of 3-methyl-2-oxobutanoate hydroxymethyltransferase from Bartonella henselae (strain ATCC 49882 / DSM 28221 / CCUG 30454 / Houston 1) (Rochalimaea henselae).